The chain runs to 368 residues: UDP-N-acetylglucosamine--N-acetylmuramyl-(pentapeptide) pyrophosphoryl-undecaprenol N-acetylglucosamine transferase (368 aa).

UDP-N-acetyl-alpha-D-glucosamine is bound by residues 10–12, N126, S200, I255, and Q300; that span reads TGG.

It belongs to the glycosyltransferase 28 family. MurG subfamily.

It localises to the cell membrane. The catalysed reaction is Mur2Ac(oyl-L-Ala-gamma-D-Glu-L-Lys-D-Ala-D-Ala)-di-trans,octa-cis-undecaprenyl diphosphate + UDP-N-acetyl-alpha-D-glucosamine = beta-D-GlcNAc-(1-&gt;4)-Mur2Ac(oyl-L-Ala-gamma-D-Glu-L-Lys-D-Ala-D-Ala)-di-trans,octa-cis-undecaprenyl diphosphate + UDP + H(+). It participates in cell wall biogenesis; peptidoglycan biosynthesis. Functionally, cell wall formation. Catalyzes the transfer of a GlcNAc subunit on undecaprenyl-pyrophosphoryl-MurNAc-pentapeptide (lipid intermediate I) to form undecaprenyl-pyrophosphoryl-MurNAc-(pentapeptide)GlcNAc (lipid intermediate II). This chain is UDP-N-acetylglucosamine--N-acetylmuramyl-(pentapeptide) pyrophosphoryl-undecaprenol N-acetylglucosamine transferase, found in Lactobacillus acidophilus (strain ATCC 700396 / NCK56 / N2 / NCFM).